The chain runs to 783 residues: DNA repair and recombination protein RAD54-like (783 aa).

A required for chromatin remodeling, strand pairing activities and coupling of ATPase activity region spans residues 2–9 (RRSLAPSQ). Residue Thr22 is modified to Phosphothreonine. A Helicase ATP-binding domain is found at 165–340 (EGKRGNFNGC…FSLVNFVNPE (176 aa)). ATP is bound at residue 178 to 185 (DEMGLGKT). The DEGH box signature appears at 291-294 (DEGH). The region spanning 497–654 (LLDFMLAAIR…NNESSEKHFT (158 aa)) is the Helicase C-terminal domain. Positions 737–783 (AESKPAAITEDDESEQQQQSPKRTSKNDDNDEDFDPENSAEEQFLGF) are disordered. Residues 765–776 (DNDEDFDPENSA) show a composition bias toward acidic residues.

The protein belongs to the SNF2/RAD54 helicase family. As to quaternary structure, interacts (via N-terminus) with spn-A/Rad51.

The protein localises to the nucleus. Involved in mitotic DNA repair and meiotic recombination. Functions in the recombinational DNA repair pathway. Essential for interhomolog gene conversion (GC), but may have a less important role in intersister GC than spn-A/Rad51. In the presence of DNA, spn-A/Rad51 enhances the ATPase activity of okr/Rad54. The chain is DNA repair and recombination protein RAD54-like from Drosophila mojavensis (Fruit fly).